The primary structure comprises 886 residues: Inter-alpha-trypsin inhibitor heavy chain H3 (886 aa).

Positions 1–18 are cleaved as a signal peptide; sequence MWWPYLVLALLSGLEASG. Residues 19–30 constitute a propeptide that is removed on maturation; that stretch reads FPRSPLRLLGKR. The VIT domain maps to 26–155; that stretch reads LLGKRSLPEG…KVTFELTYEE (130 aa). Asn-88 is a glycosylation site (N-linked (GlcNAc...) asparagine). A VWFA domain is found at 279–439; sequence PKNIVFVIDI…YNFLETMALE (161 aa). A glycan (N-linked (GlcNAc...) asparagine) is linked at Asn-577. Asp-646 carries the post-translational modification Aspartate 1-(chondroitin 4-sulfate)-ester. The propeptide occupies 647 to 886; sequence PHFIIQVPGK…HTDYIVPSLF (240 aa).

This sequence belongs to the ITIH family. I-alpha-I plasma protease inhibitors are assembled from one or two heavy chains (HC) and one light chain, bikunin. Pre-alpha-inhibitor (P-alpha-I) is composed of ITIH3/HC3 and bikunin. Post-translationally, heavy chains are linked to bikunin via chondroitin 4-sulfate esterified to the alpha-carboxyl of the C-terminal aspartate after propeptide cleavage.

Its subcellular location is the secreted. Its function is as follows. May act as a carrier of hyaluronan in serum or as a binding protein between hyaluronan and other matrix protein, including those on cell surfaces in tissues to regulate the localization, synthesis and degradation of hyaluronan which are essential to cells undergoing biological processes. The protein is Inter-alpha-trypsin inhibitor heavy chain H3 (ITIH3) of Mesocricetus auratus (Golden hamster).